The chain runs to 190 residues: MQEKFEQSVKNMLEIIGENPQREGLLKTPTRVFKAFEFLNSGYKQDPKQILNDALFESSNNEMVLVRDIEFYSLCEHHLLPFFGRVHVAYIPDKKVVGLSKIPRLVEVFARRLQIQEQLTEQIAEALMEHVGAKGVGVVIEARHMCVEMRGVQKANSTTSTSALRGSFLKSEKTRKEFFTLINSAKQVRF.

Cys75, His78, and Cys146 together coordinate Zn(2+).

It belongs to the GTP cyclohydrolase I family. As to quaternary structure, homomer.

It catalyses the reaction GTP + H2O = 7,8-dihydroneopterin 3'-triphosphate + formate + H(+). It participates in cofactor biosynthesis; 7,8-dihydroneopterin triphosphate biosynthesis; 7,8-dihydroneopterin triphosphate from GTP: step 1/1. This chain is GTP cyclohydrolase 1, found in Campylobacter lari (strain RM2100 / D67 / ATCC BAA-1060).